The chain runs to 1166 residues: Folliculin-interacting protein 1 (1166 aa).

Residues 37–478 (FDPSQIRLIV…TVMPNGQPPI (442 aa)) enclose the uDENN FNIP1/2-type domain. Phosphoserine; by AMPK occurs at positions 220, 230, 232, and 261. Thr-294 is modified (phosphothreonine). A Phosphoserine modification is found at Ser-296. The region spanning 486–1092 (SSQSVDMLAK…VSNLLHSTLQ (607 aa)) is the cDENN FNIP1/2-type domain. Ser-593 is modified (phosphoserine; by AMPK). Ser-594 carries the post-translational modification Phosphoserine. Residues Cys-608 and Cys-610 each coordinate Zn(2+). The short motif at 608–615 (CNCKYCSH) is the Cys degron element. The tract at residues 611–612 (KY) is KY-finger. The Zn(2+) site is built by Cys-613 and His-615. Residues Ser-760 and Ser-763 each carry the phosphoserine modification. Disordered stretches follow at residues 781–817 (TKPLKEERGAIDQHQETKQTTKDQSGESDTQNMVSEE) and 912–956 (LVPH…HDMT). 2 stretches are compositionally biased toward basic and acidic residues: residues 783 to 805 (PLKEERGAIDQHQETKQTTKDQS) and 915 to 925 (HGDKESSDKKI). Positions 929–1166 (TEWDIPRNES…HSPYVAQILL (238 aa)) are interaction with HSP90AA1. Ser-938 carries the phosphoserine; alternate; by CK2 modification. Ser-938 carries an O-linked (GlcNAc) serine; alternate glycan. Ser-939, Ser-941, Ser-946, and Ser-948 each carry phosphoserine; by CK2. The dDENN FNIP1/2-type domain maps to 1102–1157 (FCVMHLEDRLQELYFKSKMLSEYLRGQMRVHVKELGVVLGIESSDLPLLAAVASTH). Lys-1119 participates in a covalent cross-link: Glycyl lysine isopeptide (Lys-Gly) (interchain with G-Cter in ubiquitin).

It belongs to the FNIP family. In terms of assembly, homodimer and homomultimer. Heterodimer and heteromultimer with FNIP2. Interacts with FLCN (via C-terminus). Component of the lysosomal folliculin complex (LFC), composed of FLCN, FNIP1 (or FNIP2), RagA/RRAGA or RagB/RRAGB GDP-bound, RagC/RRAGC or RagD/RRAGD GTP-bound, and Ragulator. Interacts with HSPCA and with the PRKAA1, PRKAB1 and PRKAG1 subunits of 5'-AMP-activated protein kinase (AMPK). Phosphorylated FLCN and AMPK are preferentially bound. Interacts with HSP70, STIP1, PTGES3, CDC37, BRAF, GCR and CDK4. Interacts with HSP90AA1; the interaction inhibits HSP90AA1 ATPase activity. Interacts with ATP2A2. In terms of processing, phosphorylated by AMPK in response to energetic stress. Phosphorylation by AMPK in response to mitochondrial damage promotes inactivation of the non-canonical mTORC1 signaling, nuclear translocation of TFEB and TFE3, inducing transcription of lysosomal or autophagy genes. Sequential phosphorylation by CK2 promotes its gradual interaction with HSP90AA1/Hsp90. Priming phosphorylation at Ser-938 is followed by relay phosphorylation at Ser-939, Ser-941, Ser-946 and Ser-948, promoting its gradual interaction with HSP90AA1/Hsp90. This leads to incremental inhibition of HSP90AA1/Hsp90 ATPase activity and gradual activation of both kinase and non-kinase clients. Dephosphorylated by protein phosphatase 5 (PP5), promoting glycosylation by OGT. GlcNAcylation at Ser-938 by OGT following dephosphorylation by protein phosphatase 5 (PP5) promotes ubiquitination and degradation by the proteasome. Post-translationally, ubiquitinated through 'Lys-11' linkage of ubiquitin moieties at Lys-1119 following glycosylation by OGT, leading to its degradation by the proteasome. Ubiquitinated by the CRL2(FEM1B) complex in response to reductive stress: reductive stress causes reduction of the conserved Cys degron in FNIP1, followed by zinc-binding, zinc acting as a molecular glue for recognition by the CRL2(FEM1B) complex. Ubiquitination leads to FNIP1 degradation, and activation of mitochondria to recalibrate reactive oxygen species (ROS). In terms of processing, oxidation of the Cys degron in normal conditions promotes its stabilization by preventing recognition and ubiquitination by the CRL2(FEM1B) complex. As to expression, strong expression is found in the heart, liver placenta, muscle, nasal mucosa, salivary gland and uvula and moderate expression in kidney and lung. Higher levels detected in clear cell renal cell carcinoma (RCC) and chromophobe RCC than in normal kidney tissue. Expressed in peripheral blood mononuclear cells.

It localises to the lysosome membrane. Its subcellular location is the cytoplasm. It is found in the cytosol. Binding partner of the GTPase-activating protein FLCN: involved in the cellular response to amino acid availability by regulating the non-canonical mTORC1 signaling cascade controlling the MiT/TFE factors TFEB and TFE3. Required to promote FLCN recruitment to lysosomes and interaction with Rag GTPases, leading to activation of the non-canonical mTORC1 signaling. In low-amino acid conditions, component of the lysosomal folliculin complex (LFC) on the membrane of lysosomes, which inhibits the GTPase-activating activity of FLCN, thereby inactivating mTORC1 and promoting nuclear translocation of TFEB and TFE3. Upon amino acid restimulation, disassembly of the LFC complex liberates the GTPase-activating activity of FLCN, leading to activation of mTORC1 and subsequent inactivation of TFEB and TFE3. Together with FLCN, regulates autophagy: following phosphorylation by ULK1, interacts with GABARAP and promotes autophagy. In addition to its role in mTORC1 signaling, also acts as a co-chaperone of HSP90AA1/Hsp90: following gradual phosphorylation by CK2, inhibits the ATPase activity of HSP90AA1/Hsp90, leading to activate both kinase and non-kinase client proteins of HSP90AA1/Hsp90. Acts as a scaffold to load client protein FLCN onto HSP90AA1/Hsp90. Competes with the activating co-chaperone AHSA1 for binding to HSP90AA1, thereby providing a reciprocal regulatory mechanism for chaperoning of client proteins. Also acts as a core component of the reductive stress response by inhibiting activation of mitochondria in normal conditions: in response to reductive stress, the conserved Cys degron is reduced, leading to recognition and polyubiquitylation by the CRL2(FEM1B) complex, followed by proteasomal. Required for B-cell development. This chain is Folliculin-interacting protein 1, found in Homo sapiens (Human).